A 366-amino-acid chain; its full sequence is Peptide chain release factor 1 (366 aa).

Gln230 carries the post-translational modification N5-methylglutamine. 2 stretches are compositionally biased toward basic and acidic residues: residues 283–293 (ARDAQEARDRA) and 315–328 (VTDH…KNHP). Positions 283-335 (ARDAQEARDRAAQVGSGERSEKIRTYNYPQNRVTDHRLEGDSKNHPLDSVMAG) are disordered.

The protein belongs to the prokaryotic/mitochondrial release factor family. Methylated by PrmC. Methylation increases the termination efficiency of RF1.

The protein localises to the cytoplasm. Functionally, peptide chain release factor 1 directs the termination of translation in response to the peptide chain termination codons UAG and UAA. This chain is Peptide chain release factor 1, found in Deinococcus deserti (strain DSM 17065 / CIP 109153 / LMG 22923 / VCD115).